Reading from the N-terminus, the 373-residue chain is Zinc finger protein CONSTANS (373 aa).

Residues 15–57 (NRARPCDTCRSNACTVYCHADSAYLCMSCDAQVHSANRVASRH) form a B box-type 1; atypical zinc finger. Zn(2+)-binding residues include Cys20, Cys23, Cys43, His48, Cys63, Cys66, Cys86, and His91. The segment at 58 to 108 (KRVRVCESCERAPAAFLCEADDASLCTACDSEVHSANPLARRHQRVPILPI) adopts a B box-type 2; atypical zinc-finger fold. Positions 109-120 (SGNSFSSMTTTH) are enriched in polar residues. The interval 109–130 (SGNSFSSMTTTHHQSEKTMTDP) is disordered. Basic and acidic residues predominate over residues 121 to 130 (HQSEKTMTDP). In terms of domain architecture, CCT spans 306 to 348 (REARVLRYREKRKTRKFEKTIRYASRKAYAEIRPRVNGRFAKR).

The protein belongs to the CONSTANS family. Interacts with ADO3, SPA1, SPA2, SPA3 and SPA4. Interacts with MRG1 and MRG2 (via MRG domain). Interacts (via B-box) with MIP1A. Interacts with AS1 to form a functional complex regulating FT expression. Interacts with NFYC9. Component of a red light-dependent nuclear complex made of PHL, PHYB and CO. Interacts directly with PHL in the presence of PHYB. In terms of tissue distribution, expressed in leaves, shoots and shoot apical meristem. Detected in the vascular tissue of the hypocotyl, the cotyledons and the leaves. Restricted to the protoxylem and phloem in young inflorescence stems and to the phloem only in older inflorescences. Also detected in the vascular tissue of the root.

The protein resides in the nucleus. Functionally, transcription factor that acts in the long day flowering pathway and may mediate between the circadian clock and the control of flowering. Plays a role in the regulation of flowering time by acting on 'SUPPRESSOR OF OVEREXPRESSION OF CO1', 'TERMINAL FLOWER 1' and 'FLOWERING LOCUS T'. Also regulates P5CS2 and ACS10 (involved in proline and ethylene biosynthesis, respectively). Regulates the expression of NAKR1 by binding to the 5'-TGTG(N2-3)ATG-3' motif. In Arabidopsis thaliana (Mouse-ear cress), this protein is Zinc finger protein CONSTANS.